The primary structure comprises 265 residues: MATTVAIEVSNLSKSFKGKTAIKNVYCSINEGEMVALIGASGSGKSTLLRHINGLHIGDAGTVYIFGTVLQSKGKVHSKITSLRSQIGCIFQQFNLVNRLTVIENVLVGKLARLSILRSILRLFSKEEKAQALSALERVGIIEHAYKRASKLSGGQQQRVAIARCLVQGAKIILADEPIASLDPESARKVMELLVQLNRQSGITVVASLHQIQMVRSYFDRAIALRDGEVMFDGATVELDDKKLNEIYGTAAEELVMRGHGELLV.

One can recognise an ABC transporter domain in the interval isoleucine 7 to alanine 252. Glycine 39–serine 46 provides a ligand contact to ATP.

It belongs to the ABC transporter superfamily. Phosphonates importer (TC 3.A.1.9.1) family. The complex is composed of two ATP-binding proteins (PhnC), two transmembrane proteins (PhnE) and a solute-binding protein (PhnD).

The protein resides in the cell inner membrane. The enzyme catalyses phosphonate(out) + ATP + H2O = phosphonate(in) + ADP + phosphate + H(+). Functionally, part of the ABC transporter complex PhnCDE involved in phosphonates import. Responsible for energy coupling to the transport system. This chain is Phosphonates import ATP-binding protein PhnC 1, found in Nostoc sp. (strain PCC 7120 / SAG 25.82 / UTEX 2576).